Consider the following 321-residue polypeptide: ATP phosphoribosyltransferase regulatory subunit (321 aa).

Belongs to the class-II aminoacyl-tRNA synthetase family. HisZ subfamily. In terms of assembly, heteromultimer composed of HisG and HisZ subunits.

It is found in the cytoplasm. The protein operates within amino-acid biosynthesis; L-histidine biosynthesis; L-histidine from 5-phospho-alpha-D-ribose 1-diphosphate: step 1/9. Required for the first step of histidine biosynthesis. May allow the feedback regulation of ATP phosphoribosyltransferase activity by histidine. In Thiobacillus denitrificans (strain ATCC 25259 / T1), this protein is ATP phosphoribosyltransferase regulatory subunit.